Consider the following 85-residue polypeptide: ATP synthase subunit 9, mitochondrial (85 aa).

Helical transmembrane passes span Ile-19–Phe-39 and Ile-61–Ile-81.

This sequence belongs to the ATPase C chain family. As to quaternary structure, F-type ATPases have 2 components, CF(1) - the catalytic core - and CF(0) - the membrane proton channel. CF(1) has five subunits: alpha(3), beta(3), gamma(1), delta(1), epsilon(1). CF(0) has three main subunits: a, b and c.

The protein localises to the mitochondrion membrane. This protein is one of the chains of the nonenzymatic membrane component (F0) of mitochondrial ATPase. The protein is ATP synthase subunit 9, mitochondrial (ATP9) of Arabidopsis thaliana (Mouse-ear cress).